An 84-amino-acid chain; its full sequence is Extender of the chronological lifespan protein 2 (84 aa).

This sequence belongs to the ecl1 family.

It is found in the nucleus. Involved in chronological cell aging. The chain is Extender of the chronological lifespan protein 2 (ecl2) from Schizosaccharomyces pombe (strain 972 / ATCC 24843) (Fission yeast).